An 865-amino-acid polypeptide reads, in one-letter code: MLFTVSCSKMSSIVDRDDSSIFDGLVEEDDKNKAKRVSRNKSEKKRRDQFNVLIKELGSMLPGNAREMDKSTVLQKSIDFLRKHKEITAQSDASEIRQDWKPTFLSNEEFTQLMLEALDGFFLAIMTDGSIIYVSESVTSLLEHLPSDLVDQSVFNFIPEGEHSEVYKILSTHLLESDSLTPEYLKSKNQLEFCCHMLRGTIDPKEPSTYEYMRFIGNFKSLNSVPTSAHNGFEGTIQRTHRLSYEDRVCSVATVRLATPQFIKEMCTVEEPNEEFTSRHSLEWKFLFLDHRAPPIIGYLPFEVLGTSGYDYYHVDDLENLAKCHEHLMQYGKGKSCYYRFLTKGQQWIWLQTHYYITYHQWNSRPEFIVCTHTVVSYAEVRAERRRELGIEESLPDATADKGQDSGSDNRINTVSLKEALERFDHSPTPSASSRSSRKSSHTAVSDPSSTPTKIPTDTSTPPRQHLPAHEKMAQRRSSFSSQSMNSQSVGPSLTQPVISQAANLPVPQGMSQFQFSAQLGAMQHLKDQLEQRTRMIEANIHRQQEELRKIQEQLQMVHGQGLQMFLQQSNPGLNFGSVQLSSGNSSNIQQLTPINMQGQVVPTNQIQSGMNAGHIGTSQHLIQQQSLQSTSTQQSQQSVMSGHSQQTSLASQTQSTLTAPLYNTMVISQPAPGSMVQIPSSMPQNSTQSATVTTFTQDRQIRFSQGQQLVTKLVTAPVACGAVMVPSTMLMGQVVTAYPTFATQQQQAQTLSVTQQQPQQQQPQQQQPQQQQPQQQQQSSQEQQLPSVPQPSQAQLTQSPQQFLQTSRLLHGNPSTQLILSAAFPLQQSTFPPSHHQQHQSQQQQQLSRHRTDSLTDPSKVQPQ.

Residues 32-47 (NKAKRVSRNKSEKKRR) carry the Nuclear localization signal motif. In terms of domain architecture, bHLH spans 34–84 (AKRVSRNKSEKKRRDQFNVLIKELGSMLPGNAREMDKSTVLQKSIDFLRKH). A phosphoserine mark is found at serine 38 and serine 42. 2 consecutive PAS domains span residues 107-177 (NEEF…LLES) and 262-332 (FIKE…MQYG). Residues 336 to 379 (SCYYRFLTKGQQWIWLQTHYYITYHQWNSRPEFIVCTHTVVSYA) enclose the PAC domain. The interaction with NR3C1 stretch occupies residues 371–864 (CTHTVVSYAE…SLTDPSKVQP (494 aa)). Disordered stretches follow at residues 392 to 411 (EESLPDATADKGQDSGSDNR) and 420 to 494 (ALER…GPSL). Serine 408 carries the post-translational modification Phosphoserine. Serine 427 carries the phosphoserine; by GSK3-beta modification. A Phosphoserine modification is found at serine 431. Residues 447 to 463 (DPSSTPTKIPTDTSTPP) show a composition bias toward polar residues. An interaction with SIRT1 region spans residues 450–570 (STPTKIPTDT…QGLQMFLQQS (121 aa)). Phosphothreonine; by CDK5 occurs at positions 451 and 461. The span at 478-493 (SSFSSQSMNSQSVGPS) shows a compositional bias: low complexity. The interval 514 to 564 (FQFSAQLGAMQHLKDQLEQRTRMIEANIHRQQEELRKIQEQLQMVHGQGLQ) is implicated in the circadian rhythmicity. Disordered stretches follow at residues 620–653 (QHLIQQQSLQSTSTQQSQQSVMSGHSQQTSLASQ), 755–803 (TQQQ…SPQQ), and 822–865 (SAAF…VQPQ). Low complexity-rich tracts occupy residues 755-796 (TQQQ…SQAQ) and 828-847 (QQSTFPPSHHQQHQSQQQQQ). Positions 856–865 (LTDPSKVQPQ) are enriched in polar residues. Lysine 861 is covalently cross-linked (Glycyl lysine isopeptide (Lys-Gly) (interchain with G-Cter in SUMO1)).

In terms of assembly, component of the circadian clock oscillator which includes the CRY proteins, CLOCK or NPAS2, BMAL1 or BMAL2, CSNK1D and/or CSNK1E, TIMELESS and the PER proteins. Forms a heterodimer with BMAL1. The CLOCK-BMAL1 heterodimer is required for E-box-dependent transactivation, for CLOCK nuclear translocation and degradation, and for phosphorylation of both CLOCK and BMAL1. Interacts with NR3C1 in a ligand-dependent fashion. Interacts with ESR1 and estrogen stimulates this interaction. Interacts with the complex p35/CDK5. Interacts with RELA/p65. Interacts with KAT2B, CREBBP and EP300. Interacts with ID1 and ID3. Interacts with ID2. Interacts with MTA1. Interacts with OGA. Interacts with SIRT1. Interacts with CIPC. Interacts with EZH2. Interacts with EIF4E, PIWIL1 and DDX4. Interacts with PER1, PER2, CRY1 and CRY2 and this interaction requires a translocation to the nucleus. Interaction of the CLOCK-BMAL1 heterodimer with PER or CRY inhibits transcription activation. Interaction of the CLOCK-BMAL1 with CRY1 is independent of DNA but with PER2 is off DNA. The CLOCK-BMAL1 heterodimer interacts with GSK3B. Interacts with KDM5A. Interacts with KMT2A; in a circadian manner. Interacts with MYBBP1A. Interacts with THRAP3. Interacts with MED1; this interaction requires the presence of THRAP3. Interacts with NCOA2. The CLOCK-BMAL1 heterodimer interacts with PASD1. Interacts with ASS1 and IMPDH2; in a circadian manner. Interacts with NDUFA9. Interacts with PIWIL2 (via PIWI domain). Interacts with HNF4A. Post-translationally, ubiquitinated, leading to its proteasomal degradation. O-glycosylated; contains O-GlcNAc. O-glycosylation by OGT prevents protein degradation by inhibiting ubiquitination. It also stabilizes the CLOCK-BMAL1 heterodimer thereby increasing CLOCK-BMAL1-mediated transcriptional activation of PER1/2/3 and CRY1/2. In terms of processing, phosphorylation is dependent on the CLOCK-BMAL1 heterodimer formation. Phosphorylation enhances the transcriptional activity, alters the subcellular localization and decreases the stability of the heterodimer by promoting its degradation. Phosphorylation shows circadian variations in the liver. May be phosphorylated by CSNK1D and CKSN1E. Post-translationally, sumoylation enhances its transcriptional activity and interaction with ESR1, resulting in up-regulation of ESR1 activity. Estrogen stimulates sumoylation. Desumoylation by SENP1 negatively regulates its transcriptional activity. Undergoes lysosome-mediated degradation in a time-dependent manner in the liver.

Its subcellular location is the cytoplasm. It is found in the nucleus. It localises to the cytosol. It carries out the reaction L-lysyl-[protein] + acetyl-CoA = N(6)-acetyl-L-lysyl-[protein] + CoA + H(+). Transcriptional activator which forms a core component of the circadian clock. The circadian clock, an internal time-keeping system, regulates various physiological processes through the generation of approximately 24 hour circadian rhythms in gene expression, which are translated into rhythms in metabolism and behavior. It is derived from the Latin roots 'circa' (about) and 'diem' (day) and acts as an important regulator of a wide array of physiological functions including metabolism, sleep, body temperature, blood pressure, endocrine, immune, cardiovascular, and renal function. Consists of two major components: the central clock, residing in the suprachiasmatic nucleus (SCN) of the brain, and the peripheral clocks that are present in nearly every tissue and organ system. Both the central and peripheral clocks can be reset by environmental cues, also known as Zeitgebers (German for 'timegivers'). The predominant Zeitgeber for the central clock is light, which is sensed by retina and signals directly to the SCN. The central clock entrains the peripheral clocks through neuronal and hormonal signals, body temperature and feeding-related cues, aligning all clocks with the external light/dark cycle. Circadian rhythms allow an organism to achieve temporal homeostasis with its environment at the molecular level by regulating gene expression to create a peak of protein expression once every 24 hours to control when a particular physiological process is most active with respect to the solar day. Transcription and translation of core clock components (CLOCK, NPAS2, BMAL1, BMAL2, PER1, PER2, PER3, CRY1 and CRY2) plays a critical role in rhythm generation, whereas delays imposed by post-translational modifications (PTMs) are important for determining the period (tau) of the rhythms (tau refers to the period of a rhythm and is the length, in time, of one complete cycle). A diurnal rhythm is synchronized with the day/night cycle, while the ultradian and infradian rhythms have a period shorter and longer than 24 hours, respectively. Disruptions in the circadian rhythms contribute to the pathology of cardiovascular diseases, cancer, metabolic syndromes and aging. A transcription/translation feedback loop (TTFL) forms the core of the molecular circadian clock mechanism. Transcription factors, CLOCK or NPAS2 and BMAL1 or BMAL2, form the positive limb of the feedback loop, act in the form of a heterodimer and activate the transcription of core clock genes and clock-controlled genes (involved in key metabolic processes), harboring E-box elements (5'-CACGTG-3') within their promoters. The core clock genes: PER1/2/3 and CRY1/2 which are transcriptional repressors form the negative limb of the feedback loop and interact with the CLOCK|NPAS2-BMAL1|BMAL2 heterodimer inhibiting its activity and thereby negatively regulating their own expression. This heterodimer also activates nuclear receptors NR1D1/2 and RORA/B/G, which form a second feedback loop and which activate and repress BMAL1 transcription, respectively. Regulates the circadian expression of ICAM1, VCAM1, CCL2, THPO and MPL and also acts as an enhancer of the transactivation potential of NF-kappaB. Plays an important role in the homeostatic regulation of sleep. The CLOCK-BMAL1 heterodimer regulates the circadian expression of SERPINE1/PAI1, VWF, B3, CCRN4L/NOC, NAMPT, DBP, MYOD1, PPARGC1A, PPARGC1B, SIRT1, GYS2, F7, NGFR, GNRHR, BHLHE40/DEC1, ATF4, MTA1, KLF10 and also genes implicated in glucose and lipid metabolism. Promotes rhythmic chromatin opening, regulating the DNA accessibility of other transcription factors. The CLOCK-BMAL2 heterodimer activates the transcription of SERPINE1/PAI1 and BHLHE40/DEC1. The preferred binding motif for the CLOCK-BMAL1 heterodimer is 5'-CACGTGA-3', which contains a flanking adenine nucleotide at the 3-prime end of the canonical 6-nucleotide E-box sequence. CLOCK specifically binds to the half-site 5'-CAC-3', while BMAL1 binds to the half-site 5'-GTGA-3'. The CLOCK-BMAL1 heterodimer also recognizes the non-canonical E-box motifs 5'-AACGTGA-3' and 5'-CATGTGA-3'. CLOCK has an intrinsic acetyltransferase activity, which enables circadian chromatin remodeling by acetylating histones and nonhistone proteins, including its own partner BMAL1. Represses glucocorticoid receptor NR3C1/GR-induced transcriptional activity by reducing the association of NR3C1/GR to glucocorticoid response elements (GREs) via the acetylation of multiple lysine residues located in its hinge region. The acetyltransferase activity of CLOCK is as important as its transcription activity in circadian control. Acetylates metabolic enzymes IMPDH2 and NDUFA9 in a circadian manner. Facilitated by BMAL1, rhythmically interacts and acetylates argininosuccinate synthase 1 (ASS1) leading to enzymatic inhibition of ASS1 as well as the circadian oscillation of arginine biosynthesis and subsequent ureagenesis. Drives the circadian rhythm of blood pressure through transcriptional activation of ATP1B1. This is Circadian locomoter output cycles protein kaput (Clock) from Spalax judaei (Judean Mountains blind mole rat).